The primary structure comprises 101 residues: Protein translation factor SUI1 homolog (101 aa).

The protein belongs to the SUI1 family.

This chain is Protein translation factor SUI1 homolog, found in Aeropyrum pernix (strain ATCC 700893 / DSM 11879 / JCM 9820 / NBRC 100138 / K1).